Reading from the N-terminus, the 872-residue chain is DNA mismatch repair protein MutS (872 aa).

Residues 1–17 (MSISKIESVNAEKQSPV) are compositionally biased toward polar residues. Residues 1–22 (MSISKIESVNAEKQSPVGTEIG) are disordered. Residue 632 to 639 (GPNMGGKS) coordinates ATP.

Belongs to the DNA mismatch repair MutS family.

This protein is involved in the repair of mismatches in DNA. It is possible that it carries out the mismatch recognition step. This protein has a weak ATPase activity. This chain is DNA mismatch repair protein MutS, found in Azoarcus sp. (strain BH72).